Here is a 107-residue protein sequence, read N- to C-terminus: Nucleoid-associated protein MCA1327 (107 aa).

The protein belongs to the YbaB/EbfC family. As to quaternary structure, homodimer.

It is found in the cytoplasm. It localises to the nucleoid. Its function is as follows. Binds to DNA and alters its conformation. May be involved in regulation of gene expression, nucleoid organization and DNA protection. This Methylococcus capsulatus (strain ATCC 33009 / NCIMB 11132 / Bath) protein is Nucleoid-associated protein MCA1327.